Here is a 66-residue protein sequence, read N- to C-terminus: DNA-directed RNA polymerase subunit omega (66 aa).

Belongs to the RNA polymerase subunit omega family. The RNAP catalytic core consists of 2 alpha, 1 beta, 1 beta' and 1 omega subunit. When a sigma factor is associated with the core the holoenzyme is formed, which can initiate transcription.

It catalyses the reaction RNA(n) + a ribonucleoside 5'-triphosphate = RNA(n+1) + diphosphate. Functionally, promotes RNA polymerase assembly. Latches the N- and C-terminal regions of the beta' subunit thereby facilitating its interaction with the beta and alpha subunits. This chain is DNA-directed RNA polymerase subunit omega, found in Bacillus licheniformis (strain ATCC 14580 / DSM 13 / JCM 2505 / CCUG 7422 / NBRC 12200 / NCIMB 9375 / NCTC 10341 / NRRL NRS-1264 / Gibson 46).